The following is a 106-amino-acid chain: U1-lycotoxin-Ls1b (106 aa).

An N-terminal signal peptide occupies residues 1–19 (MKVLVVVALLVTLISYSSS). The propeptide occupies 20–40 (EGIDDLEADELLSLMANEQTR). 4 cysteine pairs are disulfide-bonded: C43/C58, C50/C67, C57/C85, and C69/C83.

This sequence belongs to the neurotoxin 19 (CSTX) family. 04 (U1-Lctx) subfamily. As to expression, expressed by the venom gland.

The protein localises to the secreted. The protein is U1-lycotoxin-Ls1b of Lycosa singoriensis (Wolf spider).